The following is a 236-amino-acid chain: MSYNLTDPYEIARYIKEAKKSTPIKAYIEGDLSNCDFTNIEKFNSGDLYILFGESEEILVIIEKNKDKIKNCRIEQDRRKSAIPLLDMLKINARIEPGATIRDKVIIGENAVIMMGAVVNIGAEIGEGTMVDMNAVVGARGKLGKNVHLGAGAVVAGVLEPPSSDPCTIEDNVLIGANAVILEGVKIGKGSVVAAGSIVTTDVPENVVVAGAPAKIIKEVDVKTKDKTKLLDDLRK.

It belongs to the transferase hexapeptide repeat family. DapH subfamily.

The catalysed reaction is (S)-2,3,4,5-tetrahydrodipicolinate + acetyl-CoA + H2O = L-2-acetamido-6-oxoheptanedioate + CoA. It functions in the pathway amino-acid biosynthesis; L-lysine biosynthesis via DAP pathway; LL-2,6-diaminopimelate from (S)-tetrahydrodipicolinate (acetylase route): step 1/3. Its function is as follows. Catalyzes the transfer of an acetyl group from acetyl-CoA to tetrahydrodipicolinate. In Clostridium botulinum (strain ATCC 19397 / Type A), this protein is 2,3,4,5-tetrahydropyridine-2,6-dicarboxylate N-acetyltransferase.